Reading from the N-terminus, the 173-residue chain is MSNLYESIRKYKCGYIEEILNILDMFDPLLNKFQRNSCYEDMKSELSLFMFNLIDNFPLEKDCFKEDKFIINYIYKALKNKFIQVNKLHQKIKSCESNIDIVALNNCDYSNLLSFVIFEDIIKDLTQNEKNIIRKIYLDRLRESEISRELNISRQAVNKTHLRALEKLKKLIN.

The interval I122–K169 is sigma-70 factor domain-4. Residues E143–L162 constitute a DNA-binding region (H-T-H motif).

This sequence belongs to the sigma-70 factor family.

Sigma factors are initiation factors that promote the attachment of RNA polymerase to specific initiation sites and are then released. Transcriptional regulator specifically required to activate expression of the toxin gene locus, composed of tcsL, tcsH and tcdE/utxA. The chain is RNA polymerase sigma factor TcsR from Paraclostridium sordellii (Clostridium sordellii).